Here is a 330-residue protein sequence, read N- to C-terminus: D-alanine--D-alanine ligase (330 aa).

Residues 121 to 321 (NHYLKDFGVK…IKDVMTDIIE (201 aa)) enclose the ATP-grasp domain. Residue 149–204 (VTRLGLPIFVKPNDGGSSFGVTKVKEVSAIQPAIAKAFGEGREVILERFIDGTEVT) coordinates ATP. Positions 275, 288, and 290 each coordinate Mg(2+).

This sequence belongs to the D-alanine--D-alanine ligase family. Requires Mg(2+) as cofactor. It depends on Mn(2+) as a cofactor.

It localises to the cytoplasm. The enzyme catalyses 2 D-alanine + ATP = D-alanyl-D-alanine + ADP + phosphate + H(+). It functions in the pathway cell wall biogenesis; peptidoglycan biosynthesis. Functionally, cell wall formation. This is D-alanine--D-alanine ligase from Parabacteroides distasonis (strain ATCC 8503 / DSM 20701 / CIP 104284 / JCM 5825 / NCTC 11152).